The following is a 292-amino-acid chain: Phosphoribulokinase 2 (292 aa).

12-20 (GSSGAGTST) contributes to the ATP binding site.

It belongs to the phosphoribulokinase family.

The catalysed reaction is D-ribulose 5-phosphate + ATP = D-ribulose 1,5-bisphosphate + ADP + H(+). It functions in the pathway carbohydrate biosynthesis; Calvin cycle. The polypeptide is Phosphoribulokinase 2 (prkB) (Cereibacter sphaeroides (Rhodobacter sphaeroides)).